The primary structure comprises 485 residues: Two-component response regulator ORR31 (485 aa).

The Response regulatory domain occupies 13–138 (RVMPVDGDTK…TMAQLWRVVA (126 aa)). At aspartate 66 the chain carries 4-aspartylphosphate. The segment covering 195 to 204 (LTINVDSGSS) has biased composition (polar residues). The segment at 195–236 (LTINVDSGSSDGADANPRQKLEHKKDAKGPLGQHVASHLQPQ) is disordered. Over residues 211–222 (PRQKLEHKKDAK) the composition is skewed to basic and acidic residues.

The protein belongs to the ARR family. Type-B subfamily. Two-component system major event consists of a His-to-Asp phosphorelay between a sensor histidine kinase (HK) and a response regulator (RR). In plants, the His-to-Asp phosphorelay involves an additional intermediate named Histidine-containing phosphotransfer protein (HPt). This multistep phosphorelay consists of a His-Asp-His-Asp sequential transfer of a phosphate group between first a His and an Asp of the HK protein, followed by the transfer to a conserved His of the HPt protein and finally the transfer to an Asp in the receiver domain of the RR protein.

Functions as a response regulator involved in His-to-Asp phosphorelay signal transduction system. Phosphorylation of the Asp residue in the receiver domain activates the ability of the protein to promote the transcription of target genes. May directly activate some type-A response regulators in response to cytokinins. This Oryza sativa subsp. japonica (Rice) protein is Two-component response regulator ORR31.